The chain runs to 266 residues: RNA polymerase II subunit A C-terminal domain phosphatase ssu-72 (266 aa).

Residues methionine 1–serine 31 form a disordered region. The segment covering glycine 9 to glycine 23 has biased composition (polar residues).

Belongs to the SSU72 phosphatase family. Component of the cleavage and polyadenylation factor (CPF) complex.

It is found in the nucleus. The enzyme catalyses O-phospho-L-seryl-[protein] + H2O = L-seryl-[protein] + phosphate. It catalyses the reaction O-phospho-L-threonyl-[protein] + H2O = L-threonyl-[protein] + phosphate. Processively dephosphorylates Ser-5 of the heptad repeats YSPTSPS in the C-terminal domain of the largest RNA polymerase II subunit (rpb-1). In terms of biological role, component of the cleavage and polyadenylation factor (CPF) complex, which plays a key role in polyadenylation-dependent pre-mRNA 3'-end formation and cooperates with cleavage factors including the CFIA complex and NAB4/CFIB. Ssu-72 is required for 3'-end formation of snoRNAs. The sequence is that of RNA polymerase II subunit A C-terminal domain phosphatase ssu-72 (ssu-72) from Neurospora crassa (strain ATCC 24698 / 74-OR23-1A / CBS 708.71 / DSM 1257 / FGSC 987).